Consider the following 263-residue polypeptide: 5'-nucleotidase SurE (263 aa).

Positions 8, 9, 40, and 93 each coordinate a divalent metal cation.

The protein belongs to the SurE nucleotidase family. A divalent metal cation is required as a cofactor.

The protein localises to the cytoplasm. The catalysed reaction is a ribonucleoside 5'-phosphate + H2O = a ribonucleoside + phosphate. Its function is as follows. Nucleotidase that shows phosphatase activity on nucleoside 5'-monophosphates. The protein is 5'-nucleotidase SurE of Caulobacter vibrioides (strain ATCC 19089 / CIP 103742 / CB 15) (Caulobacter crescentus).